The primary structure comprises 1055 residues: Type I restriction enzyme HindI endonuclease subunit (1055 aa).

Residues 287–468 enclose the Helicase ATP-binding domain; sequence TSEKGDRRIG…QDVFGRYVSI (182 aa).

It belongs to the HsdR family. In terms of assembly, the type I restriction/modification system is composed of three polypeptides R, M and S; the restriction enzyme has stoichiometry R(2)M(2)S(1) while the methyltransferase is M(2)S(1).

It carries out the reaction Endonucleolytic cleavage of DNA to give random double-stranded fragments with terminal 5'-phosphates, ATP is simultaneously hydrolyzed.. Its function is as follows. The restriction (R) subunit of a type I restriction enzyme that recognizes 5'-RAACN(5)TAG-3' and cleaves a random distance away. Subunit R is required for both nuclease and ATPase activities, but not for modification. After locating a non-methylated recognition site, the enzyme complex serves as a molecular motor that translocates DNA in an ATP-dependent manner until a collision occurs that triggers cleavage. The polypeptide is Type I restriction enzyme HindI endonuclease subunit (Haemophilus influenzae (strain ATCC 51907 / DSM 11121 / KW20 / Rd)).